The chain runs to 665 residues: MACMKLGSKSDAFQRQGQAWFCTTGLPSDIVVEVGEMSFHLHKFPLLSRSGVMERRIAEASKEGDDKCLIEISDLPGGDKTFELVAKFCYGVKLELTASNVVYLRCAAEHLEMTEEHGEGNLISQTETFFNQVVLKSWKDSIKALHSCDEVLEYADELNITKKCIESLAMRASTDPNLFGWPVVEHGGPMQSPGGSVLWNGISTGARPKHTSSDWWYEDASMLSFPLFKRLITVMESRGIREDIIAGSLTYYTRKHLPGLKRRRGGPESSGRFSTPLGSGNVLSEEEQKNLLEEIQELLRMQKGLVPTKFFVDMLRIAKILKASPDCIANLEKRIGMQLDQAALEDLVMPSFSHTMETLYDVDSVQRILDHFLGTDQIMPGGVGSPCSSVDDGNLIGSPQSITPMTAVAKLIDGYLAEVAPDVNLKLPKFQALAASIPEYARLLDDGLYRAIDIYLKHHPWLAETERENLCRLLDCQKLSLEACTHAAQNERLPLRIIVQVLFFEQLQLRTSVAGCFLVSDNLDGGSRQLRSGGYVGGPNEGGGGGGGWATAVRENQVLKVGMDSMRMRVCELEKECSNMRQEIEKLGKTTKGGGSASNGVGSKTWENVSKKLGFGFKLKSHQMCSAQEGSVSKSNNENVKIEKLKDVKERRGKHKKASSISSER.

One can recognise a BTB domain in the interval 28–98 (SDIVVEVGEM…CYGVKLELTA (71 aa)). An NPH3 domain is found at 214–508 (DWWYEDASML…VQVLFFEQLQ (295 aa)). Residues 260–280 (LKRRRGGPESSGRFSTPLGSG) form a disordered region. The segment covering 271-280 (GRFSTPLGSG) has biased composition (polar residues). Residue Ser279 is modified to Phosphoserine. Positions 281–306 (NVLSEEEQKNLLEEIQELLRMQKGLV) form a coiled coil. A Phosphotyrosine modification is found at Tyr449. Residues 626–639 (SAQEGSVSKSNNEN) are compositionally biased toward polar residues. Residues 626–665 (SAQEGSVSKSNNENVKIEKLKDVKERRGKHKKASSISSER) are disordered. Over residues 640–650 (VKIEKLKDVKE) the composition is skewed to basic and acidic residues.

The protein belongs to the NPH3 family.

The protein operates within protein modification; protein ubiquitination. In terms of biological role, may act as a substrate-specific adapter of an E3 ubiquitin-protein ligase complex (CUL3-RBX1-BTB) which mediates the ubiquitination and subsequent proteasomal degradation of target proteins. This is BTB/POZ domain-containing protein At1g30440 from Arabidopsis thaliana (Mouse-ear cress).